The following is a 657-amino-acid chain: Kinesin-like protein KIF22 (657 aa).

Residues 1–33 form a disordered region; it reads MNVRAKKKPQQREMASASSGPSRSLSKGGVSRR. Low complexity predominate over residues 16-33; the sequence is SASSGPSRSLSKGGVSRR. In terms of domain architecture, Kinesin motor spans 38–360; it reads RVRVAVRLRP…LNFTARSKEV (323 aa). 119-126 is an ATP binding site; sequence GPTGAGKT. Residues 388 to 415 form a disordered region; that stretch reads PSEAKKAKGPEEESTGSPESTAAPASAS. A compositionally biased stretch (low complexity) spans 402-415; that stretch reads TGSPESTAAPASAS. Phosphoserine is present on residues serine 404, serine 419, and serine 444. Lysine 457 is covalently cross-linked (Glycyl lysine isopeptide (Lys-Gly) (interchain with G-Cter in SUMO2)). Residues 457–502 are a coiled coil; it reads KRERMVLIKTVEEKNLEIERLKMKQKELEAKVLAQEALDPKEKENT. A phosphoserine mark is found at serine 537, serine 554, and serine 573.

This sequence belongs to the TRAFAC class myosin-kinesin ATPase superfamily. Kinesin family. As to quaternary structure, interacts with FAM83D and SIAH1. In terms of processing, ubiquitinated; mediated by SIAH1 and leading to its subsequent proteasomal degradation.

The protein localises to the nucleus. Its subcellular location is the cytoplasm. It localises to the cytoskeleton. Kinesin family member that is involved in spindle formation and the movements of chromosomes during mitosis and meiosis. Binds to microtubules and to DNA. Plays a role in congression of laterally attached chromosomes in NDC80-depleted cells. This chain is Kinesin-like protein KIF22 (Kif22), found in Rattus norvegicus (Rat).